Consider the following 1568-residue polypeptide: Kielin/chordin-like protein (1568 aa).

The signal sequence occupies residues 1 to 23 (MAGVGAAALSLLLHLGALALAAG). Residues 27-49 (GAVPREPPGQQTTAHSSVLAGNS) form a disordered region. The segment covering 35–49 (GQQTTAHSSVLAGNS) has biased composition (polar residues). A coiled-coil region spans residues 60–87 (LGRLEAAVMELREQNKDLQTRVRQLESC). VWFC domains lie at 136–193 (RGCS…PICR), 194–253 (PGCD…PTCQ), 253–312 (QGCT…PVCD), 312–370 (DGCF…PVCD), 426–485 (PACE…PSCD), 485–544 (DSCT…PRCP), 544–602 (PDCI…NDCS), 602–661 (SGCA…PQCP), 667–725 (AGCP…PSCD), 725–782 (DGCL…PDCD), 782–841 (DGCE…PTCQ), 900–959 (HSCL…PRCR), 959–1017 (RGCL…PQCS), 1017–1085 (SDCE…PTCA), 1082–1145 (PTCA…PVCR), and 1149–1209 (QSCV…PRCL). N340 carries an N-linked (GlcNAc...) asparagine glycan. N-linked (GlcNAc...) asparagine glycosylation occurs at N499. A glycan (N-linked (GlcNAc...) asparagine) is linked at N1090. Residues 1213–1389 (ASCMAFGDPH…EGLWPGRPCS (177 aa)) enclose the VWFD domain. 2 cysteine pairs are disulfide-bonded: C1215–C1347 and C1237–C1388. Residues 1483-1543 (CPLERGFVFD…EAHCIPPEAC (61 aa)) form the TIL domain.

As to quaternary structure, interacts with BMP7 and, by doing so, enhances binding to the type I receptors that contains cytoplasmic serine/threonine protein kinase domains. Also able to interact with activin-A and TGFB1.

Its subcellular location is the secreted. In terms of biological role, enhances bone morphogenetic protein (BMP) signaling in a paracrine manner. In contrast, it inhibits both the activin-A and TGFB1-mediated signaling pathways. This Homo sapiens (Human) protein is Kielin/chordin-like protein.